Here is a 557-residue protein sequence, read N- to C-terminus: Carotenoid-cleaving dioxygenase, mitochondrial (557 aa).

Positions 203, 263, 334, and 551 each coordinate Fe cation.

This sequence belongs to the carotenoid oxygenase family. Fe(2+) is required as a cofactor.

It is found in the mitochondrion. The catalysed reaction is all-trans-beta-carotene + O2 = beta-ionone + all-trans-10'-apo-beta-carotenal. It catalyses the reaction 5-cis-lycopene + O2 = 5-cis-10'-apo-lycopenal + (3E,5E)-6,10-dimethylundeca-3,5,9-trien-2-one. The enzyme catalyses 13-cis-lycopene + O2 = 13-cis-10'-apo-lycopenal + (3E,5E)-6,10-dimethylundeca-3,5,9-trien-2-one. It carries out the reaction lutein + O2 = (3R,6R)-hydroxy-alpha-ionone + (3R)-3-hydroxy-10'-apo-beta-carotenal. The catalysed reaction is lutein + O2 = (3R,6R)-3-hydroxy-10'-apo-alpha-carotenal + (3R)-hydroxy-beta-ionone. It catalyses the reaction all-trans-zeaxanthin + 2 O2 = 4,9-dimethyldodeca-2,4,6,8,10-pentaenedial + 2 (3R)-hydroxy-beta-ionone. The enzyme catalyses all-trans-zeaxanthin + O2 = (3R)-3-hydroxy-10'-apo-beta-carotenal + (3R)-hydroxy-beta-ionone. It carries out the reaction beta-cryptoxanthin + O2 = all-trans-10'-apo-beta-carotenal + (3R)-hydroxy-beta-ionone. The catalysed reaction is all-trans-10'-apo-beta-carotenal + O2 = beta-ionone + 4,9-dimethyldodeca-2,4,6,8,10-pentaenedial. It catalyses the reaction (3R)-3-hydroxy-10'-apo-beta-carotenal + O2 = 4,9-dimethyldodeca-2,4,6,8,10-pentaenedial + (3R)-hydroxy-beta-ionone. The enzyme catalyses (3R,6R)-3-hydroxy-10'-apo-alpha-carotenal + O2 = (3R,6R)-hydroxy-alpha-ionone + 4,9-dimethyldodeca-2,4,6,8,10-pentaenedial. Functionally, broad specificity mitochondrial dioxygenase that mediates the asymmetric oxidative cleavage of carotenoids. Cleaves carotenes (pure hydrocarbon carotenoids) such as all-trans-beta-carotene and lycopene as well as xanthophylls (oxygenated carotenoids) such as zeaxanthin, lutein and beta-cryptoxanthin at both the 9,10 and the 9',10' carbon-carbon double bond. Through its function in carotenoids metabolism regulates oxidative stress and the production of important signaling molecules. The polypeptide is Carotenoid-cleaving dioxygenase, mitochondrial (Pongo abelii (Sumatran orangutan)).